The following is a 325-amino-acid chain: ATP phosphoribosyltransferase (325 aa).

The protein belongs to the ATP phosphoribosyltransferase family. Long subfamily. Mg(2+) is required as a cofactor.

The protein resides in the cytoplasm. The catalysed reaction is 1-(5-phospho-beta-D-ribosyl)-ATP + diphosphate = 5-phospho-alpha-D-ribose 1-diphosphate + ATP. Its pathway is amino-acid biosynthesis; L-histidine biosynthesis; L-histidine from 5-phospho-alpha-D-ribose 1-diphosphate: step 1/9. Its activity is regulated as follows. Feedback inhibited by histidine. Catalyzes the condensation of ATP and 5-phosphoribose 1-diphosphate to form N'-(5'-phosphoribosyl)-ATP (PR-ATP). Has a crucial role in the pathway because the rate of histidine biosynthesis seems to be controlled primarily by regulation of HisG enzymatic activity. This is ATP phosphoribosyltransferase from Afipia carboxidovorans (strain ATCC 49405 / DSM 1227 / KCTC 32145 / OM5) (Oligotropha carboxidovorans).